The primary structure comprises 203 residues: Probable GTP-binding protein EngB (203 aa).

The EngB-type G domain occupies 24-199 (DGSEVAFAGR…HTVIETWLGL (176 aa)). GTP contacts are provided by residues 32–39 (GRSNAGKS), 59–63 (GRTQQ), 77–80 (DLPG), 144–147 (TKAD), and 178–180 (FSS). Mg(2+) contacts are provided by Ser-39 and Thr-61.

Belongs to the TRAFAC class TrmE-Era-EngA-EngB-Septin-like GTPase superfamily. EngB GTPase family. Mg(2+) serves as cofactor.

In terms of biological role, necessary for normal cell division and for the maintenance of normal septation. The sequence is that of Probable GTP-binding protein EngB from Xylella fastidiosa (strain 9a5c).